Reading from the N-terminus, the 322-residue chain is Pilin gene-inverting protein (322 aa).

Its function is as follows. May be the site-specific invertase required for pilin gene inversion. Moraxella can express either a Q or I pilin; the inversion of 2 kb of DNA determines which pilin is expressed. This is Pilin gene-inverting protein (piv) from Moraxella bovis.